Reading from the N-terminus, the 384-residue chain is FAD-dependent urate hydroxylase (384 aa).

FAD contacts are provided by residues G11, 30-31 (EA), S43, and V125. Substrate-binding positions include N178, R204, and 216–218 (YFF). FAD-binding positions include D285 and 295–299 (GQGGC).

Belongs to the FAD-dependent urate hydroxylase family. FAD serves as cofactor.

It carries out the reaction urate + NADH + O2 + H(+) = 5-hydroxyisourate + NAD(+) + H2O. The protein operates within purine metabolism; urate degradation. Its function is as follows. Catalyzes the hydroxylation of uric acid to 5-hydroxyisourate. This Klebsiella oxytoca protein is FAD-dependent urate hydroxylase (hpxO).